A 148-amino-acid polypeptide reads, in one-letter code: Large ribosomal subunit protein bL9 (148 aa).

In terms of assembly, part of the 50S ribosomal subunit.

Its function is as follows. Binds to the 23S rRNA. Extends more that 50 Angstroms beyond the surface of the 70S ribosome. The polypeptide is Large ribosomal subunit protein bL9 (rplI) (Thermus thermophilus (strain ATCC 27634 / DSM 579 / HB8)).